Here is a 146-residue protein sequence, read N- to C-terminus: Zinc metalloproteinase-disintegrin salmosin-3 (146 aa).

The region spanning 1–57 is the Peptidase M12B domain; that stretch reads SCPCDANSCIMSATLSNEPSSRFSDCSFSLPSRFSDCSFNQYSSDIIHYHECLLNEP. 9 disulfide bridges follow: Cys2-Cys37, Cys4-Cys9, Cys68-Cys87, Cys79-Cys97, Cys81-Cys92, Cys91-Cys114, Cys105-Cys111, Cys110-Cys135, and Cys123-Cys142. Residues 65–146 form the Disintegrin domain; that stretch reads PPVCGNYYPE…GQSGVCPRNT (82 aa). Residues 127–129 carry the Cell attachment site motif; the sequence is RGD.

Belongs to the venom metalloproteinase (M12B) family. P-II subfamily. P-IIb sub-subfamily. As to quaternary structure, monomer (disintegrin). Requires Zn(2+) as cofactor. As to expression, expressed by the venom gland.

It is found in the secreted. In terms of biological role, snake venom zinc metalloproteinase that inhibits ADP-induced platelet aggregation (probably by binding integrin alpha-IIb/beta-3 (ITGA2B/ITGB3)) and degrades fibrinogen. In Gloydius brevicauda (Korean slamosa snake), this protein is Zinc metalloproteinase-disintegrin salmosin-3.